Here is a 90-residue protein sequence, read N- to C-terminus: MAKATSSLVVPIIFLVIFALVEQNMGCNDYIVGDVCVHCRERCLRYYPVTRKAECYRNHCLCIGPCPDDRPHKRFQMLNSSKNVKAQILS.

A signal peptide spans 1–23 (MAKATSSLVVPIIFLVIFALVEQ). Intrachain disulfides connect Cys27/Cys66, Cys36/Cys55, Cys39/Cys60, and Cys43/Cys62.

This sequence belongs to the DEFL family.

The protein localises to the secreted. The sequence is that of Defensin-like protein 178 (LCR64) from Arabidopsis thaliana (Mouse-ear cress).